Consider the following 105-residue polypeptide: Thiosulfate sulfurtransferase GlpE (105 aa).

Residues 15–103 (MQQGAILVDI…WCRAELPIDT (89 aa)) form the Rhodanese domain. The Cysteine persulfide intermediate role is filled by Cys-63.

Belongs to the GlpE family.

It is found in the cytoplasm. The catalysed reaction is thiosulfate + hydrogen cyanide = thiocyanate + sulfite + 2 H(+). The enzyme catalyses thiosulfate + [thioredoxin]-dithiol = [thioredoxin]-disulfide + hydrogen sulfide + sulfite + 2 H(+). In terms of biological role, transferase that catalyzes the transfer of sulfur from thiosulfate to thiophilic acceptors such as cyanide or dithiols. May function in a CysM-independent thiosulfate assimilation pathway by catalyzing the conversion of thiosulfate to sulfite, which can then be used for L-cysteine biosynthesis. The polypeptide is Thiosulfate sulfurtransferase GlpE (Haemophilus influenzae (strain 86-028NP)).